The following is a 100-amino-acid chain: Small ribosomal subunit protein uS14c (100 aa).

Residues 1–54 (MARKSLIQRERKRQKLEQKFHSIRRSSKKEISKVSSLSGKWEIHGKLQSPPRNS) are disordered.

This sequence belongs to the universal ribosomal protein uS14 family. As to quaternary structure, part of the 30S ribosomal subunit.

It is found in the plastid. Its subcellular location is the chloroplast. In terms of biological role, binds 16S rRNA, required for the assembly of 30S particles. The chain is Small ribosomal subunit protein uS14c from Piper cenocladum (Ant piper).